Here is a 319-residue protein sequence, read N- to C-terminus: MATH domain and coiled-coil domain-containing protein At3g58200 (319 aa).

The MATH domain occupies 6 to 132 (DNKFRWVIKN…NEEVKIVVEV (127 aa)). Residues 255–302 (FKVDWLEKKLEEVKEKKKEEQIGETRMQEMKVFKQKCSDIEALMEREK) adopt a coiled-coil conformation.

The polypeptide is MATH domain and coiled-coil domain-containing protein At3g58200 (Arabidopsis thaliana (Mouse-ear cress)).